Here is a 323-residue protein sequence, read N- to C-terminus: Prenyl transferase (323 aa).

K46, R49, and H81 together coordinate isopentenyl diphosphate. The Mg(2+) site is built by D88 and D92. R97 lines the an all-trans-polyprenyl diphosphate pocket. R98 serves as a coordination point for isopentenyl diphosphate. An all-trans-polyprenyl diphosphate contacts are provided by K174, T175, and Q212.

It belongs to the FPP/GGPP synthase family. Requires Mg(2+) as cofactor.

It localises to the plastid. Its subcellular location is the cyanelle. Possible role in synthesis of the nonaprenyl side chain of plastoquinone or in synthesis of other prenyl chains such as undekaprenyl pyrophosphate. This Cyanophora paradoxa protein is Prenyl transferase (preA).